We begin with the raw amino-acid sequence, 521 residues long: BAR/IMD domain-containing adapter protein 2 (521 aa).

The region spanning 1-250 (MSLSRSEEMH…VQLMQQMGNS (250 aa)) is the IMD domain. Residues 132–153 (DALDKCQAELKKLRKKSQGSKN) are a coiled coil. Phosphoserine is present on residues S262, S324, S326, and S337. Residues 297-370 (APVMNGVSGP…TLPRSSSMAA (74 aa)) are disordered. Residues 321 to 333 (QPKSTSPPQSQSK) show a composition bias toward low complexity. T341 carries the phosphothreonine modification. At S347 the chain carries Phosphoserine. A compositionally biased stretch (polar residues) spans 353–368 (SYATTENKTLPRSSSM). T361 carries the post-translational modification Phosphothreonine. Phosphoserine is present on residues S367, S385, S396, and S455. Positions 375–438 (NGRMRVKAIF…PFSYTRVLDN (64 aa)) constitute an SH3 domain. Positions 450-471 (QGKSSSTGNLLDKEDLALPPPD) are disordered.

Homodimer. Interacts with CDC42 and RAC1 that have been activated by GTP binding. Interacts with ATN1, ADGRB1, DIAPH1, EPS8, SHANK1, SHANK2, SHANK3, TIAM1, WASF1 and WASF2. Interacts with ENAH after recruitment of CDC42. Post-translationally, phosphorylated on tyrosine residues by INSR in response to insulin treatment.

It localises to the cytoplasm. The protein resides in the membrane. It is found in the cell projection. Its subcellular location is the filopodium. The protein localises to the ruffle. It localises to the cytoskeleton. Its function is as follows. Adapter protein that links membrane-bound small G-proteins to cytoplasmic effector proteins. Necessary for CDC42-mediated reorganization of the actin cytoskeleton and for RAC1-mediated membrane ruffling. Involved in the regulation of the actin cytoskeleton by WASF family members and the Arp2/3 complex. Plays a role in neurite growth. Acts syngeristically with ENAH to promote filipodia formation. Plays a role in the reorganization of the actin cytoskeleton in response to bacterial infection. Participates in actin bundling when associated with EPS8, promoting filopodial protrusions. The chain is BAR/IMD domain-containing adapter protein 2 (BAIAP2) from Bos taurus (Bovine).